The sequence spans 308 residues: MAGFTAADVKKLREMSGAGMMDAKKALEETGGDLEAAVDALRAKGLAAVQKKSSRTAAEGLVGVAVEGTKGVAVEVNSETDFVAKNDQFQDFVRKTTAVALTIDGDDVEALKAADYPDGGTVTDKLTNNVATIGENQQVRRMKTVTVSQGVVVPYVHNAVAPNLGKIGVLVALESDASADVLEPLGKQLAMHIAAAFPQALDADGLDADLIERERKIAAEKAAESGKPENVQEKMVEGAIKKFAKENALLSQVFVMDNKTAIADVVLAAGKDAGTTITLKDYVRFQLGEGIEKEESDFAAEVAAAVKG.

The interval 80 to 83 is involved in Mg(2+) ion dislocation from EF-Tu; the sequence is TDFV.

The protein belongs to the EF-Ts family.

The protein localises to the cytoplasm. In terms of biological role, associates with the EF-Tu.GDP complex and induces the exchange of GDP to GTP. It remains bound to the aminoacyl-tRNA.EF-Tu.GTP complex up to the GTP hydrolysis stage on the ribosome. The protein is Elongation factor Ts of Erythrobacter litoralis (strain HTCC2594).